The following is a 141-amino-acid chain: MGLRSCTHLATLFMTLWALAFCFLVVVPIPAQTTSLQNAKDDRRLQELESKIGAESDQPNANLVGPSFSRFGDRRNQKTISFGRRVPLISRPMIPIELDLLMDNDDERTKAKRFDDYGHMRFGKRGGDDQFDDYGHMRFGR.

A signal peptide spans 1–33 (MGLRSCTHLATLFMTLWALAFCFLVVVPIPAQT). A propeptide spanning residues 34–73 (TSLQNAKDDRRLQELESKIGAESDQPNANLVGPSFSRFGD) is cleaved from the precursor. The interval 51–72 (KIGAESDQPNANLVGPSFSRFG) is disordered. A Phenylalanine amide modification is found at Phe-82. Positions 86 to 111 (VPLISRPMIPIELDLLMDNDDERTKA) are excised as a propeptide. Position 117 is a sulfotyrosine (Tyr-117). The residue at position 122 (Phe-122) is a Phenylalanine amide. Tyr-134 carries the sulfotyrosine modification. Phe-139 carries the post-translational modification Phenylalanine amide.

Belongs to the gastrin/cholecystokinin family.

Its subcellular location is the secreted. Its function is as follows. Drosulfakinin-0 (DSK 0) plays diverse biological roles including regulating gut muscle contraction in adults but not in larvae. In Drosophila mauritiana (Fruit fly), this protein is Drosulfakinins.